The chain runs to 498 residues: Lysine--tRNA ligase (498 aa).

The Mg(2+) site is built by E401 and E408.

Belongs to the class-II aminoacyl-tRNA synthetase family. In terms of assembly, homodimer. The cofactor is Mg(2+).

Its subcellular location is the cytoplasm. The catalysed reaction is tRNA(Lys) + L-lysine + ATP = L-lysyl-tRNA(Lys) + AMP + diphosphate. In Dehalococcoides mccartyi (strain CBDB1), this protein is Lysine--tRNA ligase.